The chain runs to 246 residues: 4-hydroxy-tetrahydrodipicolinate reductase (246 aa).

Residue 7–12 (GCSGRM) coordinates NAD(+). R34 provides a ligand contact to NADP(+). Residues 76 to 78 (ATT) and 102 to 105 (CPNT) contribute to the NAD(+) site. The Proton donor/acceptor role is filled by H135. H136 serves as a coordination point for (S)-2,3,4,5-tetrahydrodipicolinate. K139 functions as the Proton donor in the catalytic mechanism. 145-146 (GT) lines the (S)-2,3,4,5-tetrahydrodipicolinate pocket.

This sequence belongs to the DapB family.

The protein resides in the cytoplasm. The enzyme catalyses (S)-2,3,4,5-tetrahydrodipicolinate + NAD(+) + H2O = (2S,4S)-4-hydroxy-2,3,4,5-tetrahydrodipicolinate + NADH + H(+). It catalyses the reaction (S)-2,3,4,5-tetrahydrodipicolinate + NADP(+) + H2O = (2S,4S)-4-hydroxy-2,3,4,5-tetrahydrodipicolinate + NADPH + H(+). It functions in the pathway amino-acid biosynthesis; L-lysine biosynthesis via DAP pathway; (S)-tetrahydrodipicolinate from L-aspartate: step 4/4. Catalyzes the conversion of 4-hydroxy-tetrahydrodipicolinate (HTPA) to tetrahydrodipicolinate. In Chlamydia caviae (strain ATCC VR-813 / DSM 19441 / 03DC25 / GPIC) (Chlamydophila caviae), this protein is 4-hydroxy-tetrahydrodipicolinate reductase.